The chain runs to 279 residues: Pantothenate synthetase (279 aa).

Position 31 to 38 (31 to 38 (MGNLHGGH)) interacts with ATP. H38 serves as the catalytic Proton donor. Q62 provides a ligand contact to (R)-pantoate. Q62 serves as a coordination point for beta-alanine. 150–153 (GRKD) contributes to the ATP binding site. Q156 contacts (R)-pantoate. ATP-binding positions include V179 and 187–190 (KSSR).

It belongs to the pantothenate synthetase family. As to quaternary structure, homodimer.

It is found in the cytoplasm. The catalysed reaction is (R)-pantoate + beta-alanine + ATP = (R)-pantothenate + AMP + diphosphate + H(+). The protein operates within cofactor biosynthesis; (R)-pantothenate biosynthesis; (R)-pantothenate from (R)-pantoate and beta-alanine: step 1/1. Functionally, catalyzes the condensation of pantoate with beta-alanine in an ATP-dependent reaction via a pantoyl-adenylate intermediate. This is Pantothenate synthetase from Stenotrophomonas maltophilia (strain K279a).